We begin with the raw amino-acid sequence, 201 residues long: Recombination protein RecR (201 aa).

Residues 60–75 form a C4-type zinc finger; that stretch reads CSRCGNVDTVDPCTVC. The region spanning 83–178 is the Toprim domain; sequence SVIIVVEDVA…KITRLAHGVP (96 aa).

Belongs to the RecR family.

Its function is as follows. May play a role in DNA repair. It seems to be involved in an RecBC-independent recombinational process of DNA repair. It may act with RecF and RecO. This is Recombination protein RecR from Rhizobium rhizogenes (strain K84 / ATCC BAA-868) (Agrobacterium radiobacter).